The primary structure comprises 357 residues: NADH-quinone oxidoreductase subunit H (357 aa).

The next 8 helical transmembrane spans lie at 20–40 (WLVVWTIIKIVIIAVPIILCV), 92–112 (ILFIVAPVVTLMPALAAWAVV), 127–147 (LLYVMAITSIGVYGVIVAGWA), 165–185 (VSYELAISFVLVTVLLVSGSL), 206–226 (FLSWNWLPLLPLFVIYVISAV), 268–288 (ILLSAMASIMFLGGWMSPIDI), 294–314 (IPGWIWLGIKTFFVVSLFIWF), and 329–349 (LGWKIFIPLTGVWLVVVAIWM).

Belongs to the complex I subunit 1 family. NDH-1 is composed of 14 different subunits. Subunits NuoA, H, J, K, L, M, N constitute the membrane sector of the complex.

It is found in the cell inner membrane. It carries out the reaction a quinone + NADH + 5 H(+)(in) = a quinol + NAD(+) + 4 H(+)(out). Functionally, NDH-1 shuttles electrons from NADH, via FMN and iron-sulfur (Fe-S) centers, to quinones in the respiratory chain. The immediate electron acceptor for the enzyme in this species is believed to be ubiquinone. Couples the redox reaction to proton translocation (for every two electrons transferred, four hydrogen ions are translocated across the cytoplasmic membrane), and thus conserves the redox energy in a proton gradient. This subunit may bind ubiquinone. The protein is NADH-quinone oxidoreductase subunit H of Bordetella avium (strain 197N).